The sequence spans 569 residues: Pyruvate decarboxylase (569 aa).

Pyruvate is bound by residues Asp38 and His124. Thiamine diphosphate is bound by residues Thr398 and 421-423; that span reads GSI. Residue Asp451 participates in Mg(2+) binding. Residues 452 to 453 and 478 to 483 contribute to the thiamine diphosphate site; these read GS and NEGYTI. Mg(2+) contacts are provided by Asn478 and Gly480. Position 484 (Glu484) interacts with pyruvate.

It belongs to the TPP enzyme family. As to quaternary structure, homotetramer. Requires Mg(2+) as cofactor. Thiamine diphosphate serves as cofactor.

It catalyses the reaction a 2-oxocarboxylate + H(+) = an aldehyde + CO2. The enzyme catalyses pyruvate + H(+) = acetaldehyde + CO2. This chain is Pyruvate decarboxylase (pdcA), found in Aspergillus fumigatus (strain ATCC MYA-4609 / CBS 101355 / FGSC A1100 / Af293) (Neosartorya fumigata).